An 85-amino-acid chain; its full sequence is ATP synthase subunit c (85 aa).

The next 2 helical transmembrane spans lie at 10–30 and 65–85; these read GLAL…GAIG and AVAE…LLVV.

This sequence belongs to the ATPase C chain family. F-type ATPases have 2 components, F(1) - the catalytic core - and F(0) - the membrane proton channel. F(1) has five subunits: alpha(3), beta(3), gamma(1), delta(1), epsilon(1). F(0) has three main subunits: a(1), b(2) and c(10-14). The alpha and beta chains form an alternating ring which encloses part of the gamma chain. F(1) is attached to F(0) by a central stalk formed by the gamma and epsilon chains, while a peripheral stalk is formed by the delta and b chains.

Its subcellular location is the cell inner membrane. Functionally, f(1)F(0) ATP synthase produces ATP from ADP in the presence of a proton or sodium gradient. F-type ATPases consist of two structural domains, F(1) containing the extramembraneous catalytic core and F(0) containing the membrane proton channel, linked together by a central stalk and a peripheral stalk. During catalysis, ATP synthesis in the catalytic domain of F(1) is coupled via a rotary mechanism of the central stalk subunits to proton translocation. Its function is as follows. Key component of the F(0) channel; it plays a direct role in translocation across the membrane. A homomeric c-ring of between 10-14 subunits forms the central stalk rotor element with the F(1) delta and epsilon subunits. This is ATP synthase subunit c from Thermotoga maritima (strain ATCC 43589 / DSM 3109 / JCM 10099 / NBRC 100826 / MSB8).